Here is a 124-residue protein sequence, read N- to C-terminus: Large ribosomal subunit protein bL12 (124 aa).

The protein belongs to the bacterial ribosomal protein bL12 family. Homodimer. Part of the ribosomal stalk of the 50S ribosomal subunit. Forms a multimeric L10(L12)X complex, where L10 forms an elongated spine to which 2 to 4 L12 dimers bind in a sequential fashion. Binds GTP-bound translation factors.

In terms of biological role, forms part of the ribosomal stalk which helps the ribosome interact with GTP-bound translation factors. Is thus essential for accurate translation. This is Large ribosomal subunit protein bL12 from Christiangramia forsetii (strain DSM 17595 / CGMCC 1.15422 / KT0803) (Gramella forsetii).